Here is a 376-residue protein sequence, read N- to C-terminus: Queuine tRNA-ribosyltransferase (376 aa).

The Proton acceptor role is filled by aspartate 89. Residues 89–93, aspartate 143, glutamine 194, and glycine 221 each bind substrate; that span reads DSGGF. Residues 252-258 form an RNA binding region; that stretch reads GVGIPSN. Residue aspartate 271 is the Nucleophile of the active site. Positions 276-280 are RNA binding; important for wobble base 34 recognition; the sequence is ARNGR. Residues cysteine 309, cysteine 311, cysteine 314, and histidine 340 each coordinate Zn(2+).

It belongs to the queuine tRNA-ribosyltransferase family. As to quaternary structure, homodimer. Within each dimer, one monomer is responsible for RNA recognition and catalysis, while the other monomer binds to the replacement base PreQ1. Zn(2+) serves as cofactor.

It carries out the reaction 7-aminomethyl-7-carbaguanine + guanosine(34) in tRNA = 7-aminomethyl-7-carbaguanosine(34) in tRNA + guanine. It functions in the pathway tRNA modification; tRNA-queuosine biosynthesis. Catalyzes the base-exchange of a guanine (G) residue with the queuine precursor 7-aminomethyl-7-deazaguanine (PreQ1) at position 34 (anticodon wobble position) in tRNAs with GU(N) anticodons (tRNA-Asp, -Asn, -His and -Tyr). Catalysis occurs through a double-displacement mechanism. The nucleophile active site attacks the C1' of nucleotide 34 to detach the guanine base from the RNA, forming a covalent enzyme-RNA intermediate. The proton acceptor active site deprotonates the incoming PreQ1, allowing a nucleophilic attack on the C1' of the ribose to form the product. After dissociation, two additional enzymatic reactions on the tRNA convert PreQ1 to queuine (Q), resulting in the hypermodified nucleoside queuosine (7-(((4,5-cis-dihydroxy-2-cyclopenten-1-yl)amino)methyl)-7-deazaguanosine). The chain is Queuine tRNA-ribosyltransferase from Clostridium botulinum (strain Okra / Type B1).